A 351-amino-acid polypeptide reads, in one-letter code: Nicotinate-nucleotide--dimethylbenzimidazole phosphoribosyltransferase (351 aa).

Glutamate 313 acts as the Proton acceptor in catalysis.

The protein belongs to the CobT family.

The catalysed reaction is 5,6-dimethylbenzimidazole + nicotinate beta-D-ribonucleotide = alpha-ribazole 5'-phosphate + nicotinate + H(+). The protein operates within nucleoside biosynthesis; alpha-ribazole biosynthesis; alpha-ribazole from 5,6-dimethylbenzimidazole: step 1/2. In terms of biological role, catalyzes the synthesis of alpha-ribazole-5'-phosphate from nicotinate mononucleotide (NAMN) and 5,6-dimethylbenzimidazole (DMB). This Mycobacterium leprae (strain Br4923) protein is Nicotinate-nucleotide--dimethylbenzimidazole phosphoribosyltransferase.